The following is a 205-amino-acid chain: Riboflavin kinase (205 aa).

The tract at residues 1–24 (MRPDTSRDPVAGPDSGPEPPFPIR) is disordered. Mg(2+)-binding residues include Thr44 and Asn46. Glu104 (nucleophile) is an active-site residue.

It belongs to the flavokinase family. Zn(2+) is required as a cofactor. The cofactor is Mg(2+).

It carries out the reaction riboflavin + ATP = FMN + ADP + H(+). Its pathway is cofactor biosynthesis; FMN biosynthesis; FMN from riboflavin (ATP route): step 1/1. Functionally, catalyzes the phosphorylation of riboflavin (vitamin B2) to form flavin mononucleotide (FMN) coenzyme. This Aspergillus terreus (strain NIH 2624 / FGSC A1156) protein is Riboflavin kinase (fmn1).